The sequence spans 508 residues: DNA-directed RNA polymerase subunit Rpo1C (508 aa).

A unknown region spans residues 1–123 (MASLLWRDTS…EIKEKYGENL (123 aa)). The segment at 124-508 (SEDVQKVLDD…IYKGYPKTKK (385 aa)) is DNA-directed RNA polymerase subunit Rpo1C.

It belongs to the RNA polymerase beta' chain family. As to quaternary structure, part of the RNA polymerase complex.

Its subcellular location is the cytoplasm. The enzyme catalyses RNA(n) + a ribonucleoside 5'-triphosphate = RNA(n+1) + diphosphate. In terms of biological role, DNA-dependent RNA polymerase (RNAP) catalyzes the transcription of DNA into RNA using the four ribonucleoside triphosphates as substrates. Forms part of the jaw domain. In Thermoplasma acidophilum (strain ATCC 25905 / DSM 1728 / JCM 9062 / NBRC 15155 / AMRC-C165), this protein is DNA-directed RNA polymerase subunit Rpo1C.